A 135-amino-acid chain; its full sequence is Endoribonuclease YbeY (135 aa).

3 residues coordinate Zn(2+): H102, H106, and H112.

It belongs to the endoribonuclease YbeY family. Zn(2+) is required as a cofactor.

It is found in the cytoplasm. Functionally, single strand-specific metallo-endoribonuclease involved in late-stage 70S ribosome quality control and in maturation of the 3' terminus of the 16S rRNA. The chain is Endoribonuclease YbeY from Rubrobacter xylanophilus (strain DSM 9941 / JCM 11954 / NBRC 16129 / PRD-1).